Reading from the N-terminus, the 699-residue chain is D-(-)-3-hydroxybutyrate oligomer hydrolase (699 aa).

A signal peptide spans M1–A33. S311 acts as the Charge relay system in catalysis.

The protein belongs to the D-(-)-3-hydroxybutyrate oligomer hydrolase family.

It localises to the secreted. It carries out the reaction (3R)-hydroxybutanoate dimer + H2O = 2 (R)-3-hydroxybutanoate + H(+). It functions in the pathway lipid metabolism; butanoate metabolism. Its function is as follows. Participates in the degradation of poly-3-hydroxybutyrate (PHB). It works downstream of poly(3-hydroxybutyrate) depolymerase, hydrolyzing D(-)-3-hydroxybutyrate oligomers of various length (3HB-oligomers) into 3HB-monomers. The protein is D-(-)-3-hydroxybutyrate oligomer hydrolase of Burkholderia pseudomallei (strain 1106a).